The sequence spans 102 residues: Large ribosomal subunit protein uL24 (102 aa).

This sequence belongs to the universal ribosomal protein uL24 family. Part of the 50S ribosomal subunit.

One of two assembly initiator proteins, it binds directly to the 5'-end of the 23S rRNA, where it nucleates assembly of the 50S subunit. Its function is as follows. One of the proteins that surrounds the polypeptide exit tunnel on the outside of the subunit. The chain is Large ribosomal subunit protein uL24 from Rhizobium leguminosarum bv. trifolii (strain WSM2304).